A 638-amino-acid polypeptide reads, in one-letter code: DNA-directed RNA polymerase I subunit RPA1 (638 aa).

The span at 297 to 317 (EYDEEDDESSGESEVREGDEE) shows a compositional bias: acidic residues. The segment at 297 to 321 (EYDEEDDESSGESEVREGDEEQEKK) is disordered.

It belongs to the RNA polymerase beta' chain family. As to quaternary structure, each class of RNA polymerase is assembled from 9 to 14 different polypeptides. This subunit is the largest component of RNA polymerase I.

It localises to the nucleus. The catalysed reaction is RNA(n) + a ribonucleoside 5'-triphosphate = RNA(n+1) + diphosphate. DNA-dependent RNA polymerase catalyzes the transcription of DNA into RNA using the four ribonucleoside triphosphates as substrates. RNA polymerase I is essentially used to transcribe ribosomal DNA units. In Euplotoides octocarinatus (Freshwater ciliate), this protein is DNA-directed RNA polymerase I subunit RPA1 (RPA1).